Reading from the N-terminus, the 640-residue chain is Chaperone protein DnaK (640 aa).

Phosphothreonine; by autocatalysis is present on Thr-199. The segment at 603 to 640 is disordered; the sequence is YTQQAEEPQPQKEEGKAAEEDVVDAEFEEVKEDKNKAS. The segment covering 611–621 has biased composition (basic and acidic residues); that stretch reads QPQKEEGKAAE. Over residues 622–632 the composition is skewed to acidic residues; sequence EDVVDAEFEEV.

Belongs to the heat shock protein 70 family.

Functionally, acts as a chaperone. This chain is Chaperone protein DnaK, found in Nitrosococcus oceani (strain ATCC 19707 / BCRC 17464 / JCM 30415 / NCIMB 11848 / C-107).